We begin with the raw amino-acid sequence, 72 residues long: Cytochrome c oxidase subunit 8C, mitochondrial (72 aa).

The transit peptide at 1–29 directs the protein to the mitochondrion; the sequence is MSRLLLLCSSLLRHRAVLFSKPGHPGRLS. At 30–40 the chain is on the mitochondrial matrix side; it reads HSESPQKKILS. A helical membrane pass occupies residues 41–64; that stretch reads PTESAVGIVVFFTTFYIPAAYVLS. Residues 65 to 72 are Mitochondrial intermembrane-facing; it reads SLKYFKGE.

Belongs to the cytochrome c oxidase VIII family. In terms of assembly, component of the cytochrome c oxidase (complex IV, CIV), a multisubunit enzyme composed of 14 subunits. The complex is composed of a catalytic core of 3 subunits MT-CO1, MT-CO2 and MT-CO3, encoded in the mitochondrial DNA, and 11 supernumerary subunits COX4I, COX5A, COX5B, COX6A, COX6B, COX6C, COX7A, COX7B, COX7C, COX8 and NDUFA4, which are encoded in the nuclear genome. The complex exists as a monomer or a dimer and forms supercomplexes (SCs) in the inner mitochondrial membrane with NADH-ubiquinone oxidoreductase (complex I, CI) and ubiquinol-cytochrome c oxidoreductase (cytochrome b-c1 complex, complex III, CIII), resulting in different assemblies (supercomplex SCI(1)III(2)IV(1) and megacomplex MCI(2)III(2)IV(2)).

The protein localises to the mitochondrion inner membrane. The protein operates within energy metabolism; oxidative phosphorylation. Its function is as follows. Component of the cytochrome c oxidase, the last enzyme in the mitochondrial electron transport chain which drives oxidative phosphorylation. The respiratory chain contains 3 multisubunit complexes succinate dehydrogenase (complex II, CII), ubiquinol-cytochrome c oxidoreductase (cytochrome b-c1 complex, complex III, CIII) and cytochrome c oxidase (complex IV, CIV), that cooperate to transfer electrons derived from NADH and succinate to molecular oxygen, creating an electrochemical gradient over the inner membrane that drives transmembrane transport and the ATP synthase. Cytochrome c oxidase is the component of the respiratory chain that catalyzes the reduction of oxygen to water. Electrons originating from reduced cytochrome c in the intermembrane space (IMS) are transferred via the dinuclear copper A center (CU(A)) of subunit 2 and heme A of subunit 1 to the active site in subunit 1, a binuclear center (BNC) formed by heme A3 and copper B (CU(B)). The BNC reduces molecular oxygen to 2 water molecules using 4 electrons from cytochrome c in the IMS and 4 protons from the mitochondrial matrix. This chain is Cytochrome c oxidase subunit 8C, mitochondrial (Cox8c), found in Mus musculus (Mouse).